A 302-amino-acid polypeptide reads, in one-letter code: Vacuolar iron transporter (302 aa).

Over 1 to 70 the chain is Cytoplasmic; the sequence is MPASGAGYAG…HTNTSSDYVK (70 aa). Residues 71 to 91 form a helical membrane-spanning segment; sequence AVVFGGLDGIVTIFAIVAGCV. At 92–99 the chain is on the vacuolar side; the sequence is GADLSCSQ. A helical membrane pass occupies residues 100 to 120; it reads VLMVGLGNLLADAISMGFGEY. Residues 121–211 lie on the Cytoplasmic side of the membrane; it reads VSAAAEKDFV…IKRGLVMFTA (91 aa). Fe cation-binding residues include Glu137, Glu140, Glu148, Glu151, Met185, and Glu189. The helical transmembrane segment at 212-232 threads the bilayer; the sequence is FCFFGLLPLAGFIGWVAAFGL. At 233–235 the chain is on the vacuolar side; it reads GAE. A helical transmembrane segment spans residues 236–256; sequence ADMAFLMACVVSIMTLFILGF. The Cytoplasmic portion of the chain corresponds to 257-276; sequence SKGKFVGQNPTKSACLMAMN. The chain crosses the membrane as a helical span at residues 277 to 297; sequence GGCAGTVAYGVGSLLQLVVGA. Residues 298–302 lie on the Vacuolar side of the membrane; sequence NLTAA.

This sequence belongs to the CCC1 family.

The protein localises to the vacuole membrane. It catalyses the reaction Fe(2+)(in) = Fe(2+)(out). In terms of biological role, vacuolar iron transporter involved in the transfer of iron ions from the cytosol to the vacuole for intracellular iron storage. Plays an essential role in detoxification of excess iron. Important for parasite survival within macrophages and parasite virulence in vivo. This Toxoplasma gondii (strain ATCC 50861 / VEG) protein is Vacuolar iron transporter.